The sequence spans 152 residues: UPF0735 ACT domain-containing protein SAS1579 (152 aa).

One can recognise an ACT domain in the interval 75–150; the sequence is TLILYVTDIV…YVSKVELISM (76 aa).

Belongs to the UPF0735 family.

This chain is UPF0735 ACT domain-containing protein SAS1579, found in Staphylococcus aureus (strain MSSA476).